The sequence spans 170 residues: Adenine phosphoribosyltransferase (170 aa).

The protein belongs to the purine/pyrimidine phosphoribosyltransferase family. Homodimer.

The protein resides in the cytoplasm. The enzyme catalyses AMP + diphosphate = 5-phospho-alpha-D-ribose 1-diphosphate + adenine. The protein operates within purine metabolism; AMP biosynthesis via salvage pathway; AMP from adenine: step 1/1. In terms of biological role, catalyzes a salvage reaction resulting in the formation of AMP, that is energically less costly than de novo synthesis. The sequence is that of Adenine phosphoribosyltransferase from Thermosipho africanus (strain TCF52B).